Here is a 2120-residue protein sequence, read N- to C-terminus: Separin (2120 aa).

Position 1126 is a phosphoserine (serine 1126). The disordered stretch occupies residues 1299 to 1355 (IKSVPGSEPSKTQGQKRSGRGRQKLASAPLRLNNTSQKGLEGRGLPCTPKPPDRIRQ). A phosphoserine mark is found at serine 1396 and serine 1399. 2 disordered regions span residues 1412-1485 (AEEP…PEIM) and 1507-1561 (GSDG…PRLR). 2 stretches are compositionally biased toward basic residues: residues 1418 to 1432 (RGTA…RKGL) and 1454 to 1463 (RSRRAKKVAS). The span at 1464-1473 (RHCEERRPQR) shows a compositional bias: basic and acidic residues. A Phosphoserine modification is found at serine 1508. Basic and acidic residues predominate over residues 1548–1558 (PDKESDKDLGP). The Peptidase C50 domain occupies 1945–2040 (PRSTFYVLNP…SAALAVRGNL (96 aa)). Cysteine 2029 is an active-site residue.

Interacts with PTTG1. Interacts with RAD21. Post-translationally, autocleaves. This function, which is not essential for its protease activity, is unknown. In terms of processing, phosphorylated by CDK1. There are 8 Ser/Thr phosphorylation sites. Among them, Ser-1126 phosphorylation is the major site, which conducts to the enzyme inactivation.

It localises to the cytoplasm. Its subcellular location is the nucleus. It carries out the reaction All bonds known to be hydrolyzed by this endopeptidase have arginine in P1 and an acidic residue in P4. P6 is often occupied by an acidic residue or by a hydroxy-amino-acid residue, the phosphorylation of which enhances cleavage.. Regulated by at least two independent mechanisms. First, it is inactivated via its interaction with securin/PTTG1, which probably covers its active site. The association with PTTG1 is not only inhibitory, since PTTG1 is also required for activating it, the enzyme being inactive in cells in which PTTG1 is absent. PTTG1 degradation at anaphase, liberates it and triggers RAD21 cleavage. Second, phosphorylation at Ser-1126 inactivates it. The complete phosphorylation during mitosis, is removed when cells undergo anaphase. Activation of the enzyme at the metaphase-anaphase transition probably requires the removal of both securin and inhibitory phosphate. Caspase-like protease, which plays a central role in the chromosome segregation by cleaving the SCC1/RAD21 subunit of the cohesin complex at the onset of anaphase. During most of the cell cycle, it is inactivated by different mechanisms. This Homo sapiens (Human) protein is Separin (ESPL1).